We begin with the raw amino-acid sequence, 358 residues long: 4-hydroxybenzoate polyprenyltransferase, mitochondrial (358 aa).

A mitochondrion-targeting transit peptide spans 1–20 (MIIKPIASPARYFLRTPSWS). The next 7 membrane-spanning stretches (helical) occupy residues 76 to 96 (TGTY…AYAY), 107 to 127 (LALF…INDL), 154 to 174 (AISL…QLNP), 202 to 222 (VVLG…LAGE), 229 to 249 (VVAP…TIYA), 275 to 295 (VLCG…IMNG), and 336 to 356 (NTGY…SFIY).

The protein belongs to the UbiA prenyltransferase family. Mg(2+) is required as a cofactor.

Its subcellular location is the mitochondrion. It localises to the mitochondrion inner membrane. It catalyses the reaction an all-trans-polyprenyl diphosphate + 4-hydroxybenzoate = a 4-hydroxy-3-(all-trans-polyprenyl)benzoate + diphosphate. Its pathway is cofactor biosynthesis; ubiquinone biosynthesis. In terms of biological role, catalyzes the prenylation of para-hydroxybenzoate (PHB) with an all-trans polyprenyl group. Mediates the second step in the final reaction sequence of coenzyme Q (CoQ) biosynthesis, which is the condensation of the polyisoprenoid side chain with PHB, generating the first membrane-bound Q intermediate. The polypeptide is 4-hydroxybenzoate polyprenyltransferase, mitochondrial (Schizosaccharomyces pombe (strain 972 / ATCC 24843) (Fission yeast)).